The primary structure comprises 40 residues: Beta-defensin 1 (40 aa).

Disulfide bonds link cysteine 7-cysteine 35, cysteine 14-cysteine 29, and cysteine 19-cysteine 36. A Glycine amide modification is found at glycine 40.

In terms of assembly, monomer. Homodimer.

It is found in the secreted. It localises to the membrane. In terms of biological role, has antimicrobial activity against the Gram-positive bacteria methicillin-resistant S.aureus ATCC 33591 and L.monocytogenes EGD, the Gram-negative bacterium E.coli ML53p and the yeast C.albicans 820. Has no hemolytic activity towards human erythrocytes. The chain is Beta-defensin 1 from Emys orbicularis (European pond turtle).